We begin with the raw amino-acid sequence, 138 residues long: Large ribosomal subunit protein uL16 (138 aa).

Positions 1–17 are enriched in basic residues; that stretch reads MLIPRKVKHRKQHHPRQ. The segment at 1-23 is disordered; that stretch reads MLIPRKVKHRKQHHPRQRGIASG.

The protein belongs to the universal ribosomal protein uL16 family. In terms of assembly, part of the 50S ribosomal subunit.

Binds 23S rRNA and is also seen to make contacts with the A and possibly P site tRNAs. The sequence is that of Large ribosomal subunit protein uL16 from Mycobacterium sp. (strain JLS).